The chain runs to 108 residues: Phosphoribosyl-ATP pyrophosphatase (108 aa).

The protein belongs to the PRA-PH family.

The protein resides in the cytoplasm. It carries out the reaction 1-(5-phospho-beta-D-ribosyl)-ATP + H2O = 1-(5-phospho-beta-D-ribosyl)-5'-AMP + diphosphate + H(+). It functions in the pathway amino-acid biosynthesis; L-histidine biosynthesis; L-histidine from 5-phospho-alpha-D-ribose 1-diphosphate: step 2/9. This chain is Phosphoribosyl-ATP pyrophosphatase, found in Trichlorobacter lovleyi (strain ATCC BAA-1151 / DSM 17278 / SZ) (Geobacter lovleyi).